A 291-amino-acid chain; its full sequence is Sulfate transport system permease protein CysW (291 aa).

Residues 1–22 are Cytoplasmic-facing; it reads MAEVTQLKRYDARPINWGKWFL. The helical transmembrane segment at 23 to 43 threads the bilayer; that stretch reads IGIGMLVSAFILLVPMIYIFV. The Periplasmic segment spans residues 44–69; the sequence is QAFSKGLMPVLQNLADPDMLHAIWLT. The ABC transmembrane type-1 domain maps to 66 to 270; sequence IWLTVMIALI…MAIITLFLKS (205 aa). The chain crosses the membrane as a helical span at residues 70–90; it reads VMIALIAVPVNLVFGILLAWL. Residues 91 to 104 lie on the Cytoplasmic side of the membrane; sequence VTRFNFPGRQLLLT. Residues 105–125 traverse the membrane as a helical segment; it reads LLDIPFAVSPVVAGLVYLLFY. At 126–141 the chain is on the periplasmic side; the sequence is GSNGPLGGWLDEHNLQ. A helical membrane pass occupies residues 142-162; that stretch reads IMFSWPGMVLVTIFVTCPFVV. The Cytoplasmic portion of the chain corresponds to 163–200; sequence RELVPVMLSQGSQEDEAAILLGASGWQMFRRVTLPNIR. Residues 201–221 form a helical membrane-spanning segment; sequence WALLYGVVLTNARAIGEFGAV. Topologically, residues 222 to 247 are periplasmic; the sequence is SVVSGSIRGETLSLPLQIELLEQDYN. A helical membrane pass occupies residues 248–268; it reads TVGSFTAAALLTLMAIITLFL. The Cytoplasmic segment spans residues 269-291; that stretch reads KSMLQWRLENQEKRAQQEEHHEH.

It belongs to the binding-protein-dependent transport system permease family. CysTW subfamily. In terms of assembly, the complex is composed of two ATP-binding proteins (CysA), two transmembrane proteins (CysT and CysW) and a solute-binding protein (CysP).

It is found in the cell inner membrane. Functionally, part of the ABC transporter complex CysAWTP (TC 3.A.1.6.1) involved in sulfate/thiosulfate import. Probably responsible for the translocation of the substrate across the membrane. This is Sulfate transport system permease protein CysW (cysW) from Escherichia coli O6:H1 (strain CFT073 / ATCC 700928 / UPEC).